Reading from the N-terminus, the 223-residue chain is Large ribosomal subunit protein uL3 (223 aa).

Belongs to the universal ribosomal protein uL3 family. As to quaternary structure, part of the 50S ribosomal subunit. Forms a cluster with proteins L14 and L19.

Functionally, one of the primary rRNA binding proteins, it binds directly near the 3'-end of the 23S rRNA, where it nucleates assembly of the 50S subunit. The sequence is that of Large ribosomal subunit protein uL3 from Cutibacterium acnes (strain DSM 16379 / KPA171202) (Propionibacterium acnes).